Reading from the N-terminus, the 128-residue chain is Large ribosomal subunit protein uL22 (128 aa).

Residues 1 to 20 form a disordered region; sequence MANGHRSQIKRERNAVKDTR. A compositionally biased stretch (basic and acidic residues) spans 9–20; the sequence is IKRERNAVKDTR.

The protein belongs to the universal ribosomal protein uL22 family. Part of the 50S ribosomal subunit.

This protein binds specifically to 23S rRNA; its binding is stimulated by other ribosomal proteins, e.g. L4, L17, and L20. It is important during the early stages of 50S assembly. It makes multiple contacts with different domains of the 23S rRNA in the assembled 50S subunit and ribosome. Functionally, the globular domain of the protein is located near the polypeptide exit tunnel on the outside of the subunit, while an extended beta-hairpin is found that lines the wall of the exit tunnel in the center of the 70S ribosome. This Lachnospira eligens (strain ATCC 27750 / DSM 3376 / VPI C15-48 / C15-B4) (Eubacterium eligens) protein is Large ribosomal subunit protein uL22.